The chain runs to 87 residues: MVKNTLISVISEEEKRGSVEFQVFRFTNKIRRLTSHLELHKKDYLSQRGLRKILGKRQRLLAYLAKKNRVRYKELIGLLSIRETKTR.

Belongs to the universal ribosomal protein uS15 family. As to quaternary structure, part of the 30S ribosomal subunit.

It is found in the plastid. It localises to the chloroplast. The polypeptide is Small ribosomal subunit protein uS15c (rps15) (Coffea arabica (Arabian coffee)).